Consider the following 413-residue polypeptide: 4-hydroxy-3-methylbut-2-en-1-yl diphosphate synthase (flavodoxin) (413 aa).

Cys-298, Cys-301, Cys-344, and Glu-351 together coordinate [4Fe-4S] cluster.

It belongs to the IspG family. Requires [4Fe-4S] cluster as cofactor.

The enzyme catalyses (2E)-4-hydroxy-3-methylbut-2-enyl diphosphate + oxidized [flavodoxin] + H2O + 2 H(+) = 2-C-methyl-D-erythritol 2,4-cyclic diphosphate + reduced [flavodoxin]. It functions in the pathway isoprenoid biosynthesis; isopentenyl diphosphate biosynthesis via DXP pathway; isopentenyl diphosphate from 1-deoxy-D-xylulose 5-phosphate: step 5/6. Converts 2C-methyl-D-erythritol 2,4-cyclodiphosphate (ME-2,4cPP) into 1-hydroxy-2-methyl-2-(E)-butenyl 4-diphosphate. The polypeptide is 4-hydroxy-3-methylbut-2-en-1-yl diphosphate synthase (flavodoxin) (Koribacter versatilis (strain Ellin345)).